Here is a 367-residue protein sequence, read N- to C-terminus: Chorismate synthase (367 aa).

Arg48 and Arg54 together coordinate NADP(+). FMN is bound by residues Arg125 to Ser127, Asn238 to Ala239, Gly278, Lys293 to Ser297, and Arg319.

This sequence belongs to the chorismate synthase family. As to quaternary structure, homotetramer. FMNH2 is required as a cofactor.

It catalyses the reaction 5-O-(1-carboxyvinyl)-3-phosphoshikimate = chorismate + phosphate. Its pathway is metabolic intermediate biosynthesis; chorismate biosynthesis; chorismate from D-erythrose 4-phosphate and phosphoenolpyruvate: step 7/7. Catalyzes the anti-1,4-elimination of the C-3 phosphate and the C-6 proR hydrogen from 5-enolpyruvylshikimate-3-phosphate (EPSP) to yield chorismate, which is the branch point compound that serves as the starting substrate for the three terminal pathways of aromatic amino acid biosynthesis. This reaction introduces a second double bond into the aromatic ring system. This is Chorismate synthase from Xanthomonas campestris pv. campestris (strain 8004).